The sequence spans 156 residues: Small ribosomal subunit protein uS7 (156 aa).

Belongs to the universal ribosomal protein uS7 family. As to quaternary structure, part of the 30S ribosomal subunit. Contacts proteins S9 and S11.

One of the primary rRNA binding proteins, it binds directly to 16S rRNA where it nucleates assembly of the head domain of the 30S subunit. Is located at the subunit interface close to the decoding center, probably blocks exit of the E-site tRNA. The polypeptide is Small ribosomal subunit protein uS7 (Salinispora tropica (strain ATCC BAA-916 / DSM 44818 / JCM 13857 / NBRC 105044 / CNB-440)).